A 357-amino-acid chain; its full sequence is NADH-quinone oxidoreductase subunit H (357 aa).

Transmembrane regions (helical) follow at residues 26-46, 92-112, 127-147, 164-184, 203-223, 259-279, 294-314, and 329-349; these read LVKI…LTLW, ALFV…WAVI, LLFV…AGWA, MISY…VTGS, GLTF…IYII, FFLA…LMFL, VPGW…FIWF, and LGWK…AIWM.

It belongs to the complex I subunit 1 family. In terms of assembly, NDH-1 is composed of 14 different subunits. Subunits NuoA, H, J, K, L, M, N constitute the membrane sector of the complex.

Its subcellular location is the cell inner membrane. The enzyme catalyses a quinone + NADH + 5 H(+)(in) = a quinol + NAD(+) + 4 H(+)(out). In terms of biological role, NDH-1 shuttles electrons from NADH, via FMN and iron-sulfur (Fe-S) centers, to quinones in the respiratory chain. The immediate electron acceptor for the enzyme in this species is believed to be ubiquinone. Couples the redox reaction to proton translocation (for every two electrons transferred, four hydrogen ions are translocated across the cytoplasmic membrane), and thus conserves the redox energy in a proton gradient. This subunit may bind ubiquinone. The chain is NADH-quinone oxidoreductase subunit H from Janthinobacterium sp. (strain Marseille) (Minibacterium massiliensis).